A 687-amino-acid polypeptide reads, in one-letter code: Auxin response factor 14 (687 aa).

The segment at residues F133 to V235 is a DNA-binding region (TF-B3).

Belongs to the ARF family. As to quaternary structure, homo and heterodimers. In terms of tissue distribution, expressed in roots, culms, leaves and young panicles.

It localises to the nucleus. Functionally, auxin response factors (ARFs) are transcriptional factors that bind specifically to the DNA sequence 5'-TGTCTC-3' found in the auxin-responsive promoter elements (AuxREs). The protein is Auxin response factor 14 (ARF14) of Oryza sativa subsp. japonica (Rice).